The primary structure comprises 290 residues: BEL1-like homeodomain protein 11 (290 aa).

Positions 20 to 36 (SRYAKAVQCLVEEVIDI) are SR/KY domain. Positions 81–152 (ENHEIHIKIT…SLEEAIISQL (72 aa)) are BELL domain. The homeobox DNA-binding region spans 202–264 (AWKPIRGLPE…NARVRLWKPM (63 aa)).

Belongs to the TALE/BELL homeobox family. As to quaternary structure, may form heterodimeric complexes with TALE/KNOX proteins.

It is found in the nucleus. The protein is BEL1-like homeodomain protein 11 (BLH11) of Arabidopsis thaliana (Mouse-ear cress).